The primary structure comprises 105 residues: Small ribosomal subunit protein bS6 (105 aa).

The protein belongs to the bacterial ribosomal protein bS6 family.

Functionally, binds together with bS18 to 16S ribosomal RNA. In Lawsonia intracellularis (strain PHE/MN1-00), this protein is Small ribosomal subunit protein bS6.